The sequence spans 399 residues: S-adenosylmethionine synthase (399 aa).

Residue H16 coordinates ATP. A Mg(2+)-binding site is contributed by D18. E44 provides a ligand contact to K(+). L-methionine contacts are provided by E57 and Q100. The segment at 100–110 (QSSDIAQGVNE) is flexible loop. ATP is bound by residues 177-179 (DAK), 244-245 (RF), D253, 259-260 (RK), A276, and K280. D253 is an L-methionine binding site. K284 provides a ligand contact to L-methionine.

The protein belongs to the AdoMet synthase family. In terms of assembly, homotetramer; dimer of dimers. Mg(2+) is required as a cofactor. Requires K(+) as cofactor.

It localises to the cytoplasm. The enzyme catalyses L-methionine + ATP + H2O = S-adenosyl-L-methionine + phosphate + diphosphate. It participates in amino-acid biosynthesis; S-adenosyl-L-methionine biosynthesis; S-adenosyl-L-methionine from L-methionine: step 1/1. Its function is as follows. Catalyzes the formation of S-adenosylmethionine (AdoMet) from methionine and ATP. The overall synthetic reaction is composed of two sequential steps, AdoMet formation and the subsequent tripolyphosphate hydrolysis which occurs prior to release of AdoMet from the enzyme. The polypeptide is S-adenosylmethionine synthase (Lactococcus lactis subsp. lactis (strain IL1403) (Streptococcus lactis)).